We begin with the raw amino-acid sequence, 189 residues long: Guanylate kinase (189 aa).

The 179-residue stretch at Gly8 to Gly186 folds into the Guanylate kinase-like domain. Gly15 to Gly22 contacts ATP.

Belongs to the guanylate kinase family.

It localises to the cytoplasm. It catalyses the reaction GMP + ATP = GDP + ADP. Essential for recycling GMP and indirectly, cGMP. The chain is Guanylate kinase from Prochlorococcus marinus (strain MIT 9313).